The primary structure comprises 340 residues: MNNRFLDACWGKPVDRTPVWLMRQAGRYLPEYMAVRSRCSFLELCKTPELAAEVTIQPVDILGVDAAILFSDILTPVEPMGLKLDFVPGPVFENPVRTMADVEKLRIPDPEADVPYVLQAIRILRKELAGKVPLIGFGGAPFTLACYMVEGKGSKDWATIKRMMYAAPDVYAALMEKVTMMDMEYLNAQIRAGAQAIQIFDTWGGVLSPTDYEKYVLPYTTKLINGLNRKETPVIHFVKGSGTMLPVVQKAGGDVMGLDWHINLGSARDILGPEMAVQGNLDPTTLYAPHAVIEQEVKRVLNENAGRPGHIFNLGHGILPTVPPENAKFMVDCVHRLSQR.

Substrate-binding positions include 23 to 27, Asp72, Tyr147, Thr202, and His316; that span reads RQAGR.

It belongs to the uroporphyrinogen decarboxylase family. As to quaternary structure, homodimer.

It is found in the cytoplasm. The catalysed reaction is uroporphyrinogen III + 4 H(+) = coproporphyrinogen III + 4 CO2. It functions in the pathway porphyrin-containing compound metabolism; protoporphyrin-IX biosynthesis; coproporphyrinogen-III from 5-aminolevulinate: step 4/4. Catalyzes the decarboxylation of four acetate groups of uroporphyrinogen-III to yield coproporphyrinogen-III. In Trichlorobacter lovleyi (strain ATCC BAA-1151 / DSM 17278 / SZ) (Geobacter lovleyi), this protein is Uroporphyrinogen decarboxylase.